Here is a 385-residue protein sequence, read N- to C-terminus: DNA replication and repair protein RecF (385 aa).

G30–T37 is an ATP binding site.

The protein belongs to the RecF family.

Its subcellular location is the cytoplasm. In terms of biological role, the RecF protein is involved in DNA metabolism; it is required for DNA replication and normal SOS inducibility. RecF binds preferentially to single-stranded, linear DNA. It also seems to bind ATP. This Herpetosiphon aurantiacus (strain ATCC 23779 / DSM 785 / 114-95) protein is DNA replication and repair protein RecF.